We begin with the raw amino-acid sequence, 240 residues long: tRNA (guanine-N(7)-)-methyltransferase (240 aa).

S-adenosyl-L-methionine is bound by residues Glu-70, Glu-95, Asp-122, and Asp-145. Asp-145 is an active-site residue. Residues Lys-149, Asp-181, and 218–221 (TKFE) each bind substrate.

It belongs to the class I-like SAM-binding methyltransferase superfamily. TrmB family.

The enzyme catalyses guanosine(46) in tRNA + S-adenosyl-L-methionine = N(7)-methylguanosine(46) in tRNA + S-adenosyl-L-homocysteine. Its pathway is tRNA modification; N(7)-methylguanine-tRNA biosynthesis. Its function is as follows. Catalyzes the formation of N(7)-methylguanine at position 46 (m7G46) in tRNA. The protein is tRNA (guanine-N(7)-)-methyltransferase of Pseudomonas entomophila (strain L48).